The sequence spans 201 residues: Sorting nexin-10 (201 aa).

Residues 8-125 (EEFVSVWVRD…SLHLFLQSHL (118 aa)) form a required for interaction with ATP6V1D region. One can recognise a PX domain in the interval 10–127 (FVSVWVRDPR…HLFLQSHLNS (118 aa)). 3 residues coordinate a 1,2-diacyl-sn-glycero-3-phospho-(1D-myo-inositol-3-phosphate): Arg-53, Lys-79, and Arg-94. The tract at residues 155-201 (RFPEEEEEGKKDADVEYDSESSSSGLGHSSDDSSSHGCKTSPALQES) is disordered.

Belongs to the sorting nexin family. In terms of assembly, interacts with ATP6V1D; may play a role in ciliogenesis. In terms of tissue distribution, expressed in femur, calvariae and teeth.

It is found in the cytoplasm. Its subcellular location is the endosome membrane. It localises to the cytoskeleton. The protein resides in the microtubule organizing center. The protein localises to the centrosome. Functionally, probable phosphoinositide-binding protein involved in protein sorting and membrane trafficking in endosomes. Plays a role in cilium biogenesis through regulation of the transport and the localization of proteins to the cilium. Required for the localization to the cilium of V-ATPase subunit ATP6V1D and ATP6V0D1, and RAB8A. Involved in osteoclast differentiation and therefore bone resorption. The chain is Sorting nexin-10 (Snx10) from Mus musculus (Mouse).